The primary structure comprises 147 residues: Peptide methionine sulfoxide reductase MsrA (147 aa).

Cys10 is a catalytic residue.

Belongs to the MsrA Met sulfoxide reductase family.

The enzyme catalyses L-methionyl-[protein] + [thioredoxin]-disulfide + H2O = L-methionyl-(S)-S-oxide-[protein] + [thioredoxin]-dithiol. It catalyses the reaction [thioredoxin]-disulfide + L-methionine + H2O = L-methionine (S)-S-oxide + [thioredoxin]-dithiol. In terms of biological role, has an important function as a repair enzyme for proteins that have been inactivated by oxidation. Catalyzes the reversible oxidation-reduction of methionine sulfoxide in proteins to methionine. This chain is Peptide methionine sulfoxide reductase MsrA, found in Pelagibacter ubique (strain HTCC1062).